Consider the following 448-residue polypeptide: Exodeoxyribonuclease 7 large subunit (448 aa).

It belongs to the XseA family. Heterooligomer composed of large and small subunits.

The protein localises to the cytoplasm. It carries out the reaction Exonucleolytic cleavage in either 5'- to 3'- or 3'- to 5'-direction to yield nucleoside 5'-phosphates.. Its function is as follows. Bidirectionally degrades single-stranded DNA into large acid-insoluble oligonucleotides, which are then degraded further into small acid-soluble oligonucleotides. The sequence is that of Exodeoxyribonuclease 7 large subunit from Shewanella sp. (strain MR-4).